The following is a 242-amino-acid chain: Small ribosomal subunit protein uS2 (242 aa).

This sequence belongs to the universal ribosomal protein uS2 family.

In Shouchella clausii (strain KSM-K16) (Alkalihalobacillus clausii), this protein is Small ribosomal subunit protein uS2.